The primary structure comprises 320 residues: 1-aminocyclopropane-1-carboxylate oxidase 2 (320 aa).

Residues 111–143 are a coiled coil; the sequence is DEYRTAMKDFGKRLENLAEDLLDLLCENLGLEK. Residues 156-256 enclose the Fe2OG dioxygenase domain; sequence PTFGTKVSNY…RMSVASFYNP (101 aa). Fe cation contacts are provided by His180, Asp182, and His237. Arg247 serves as a coordination point for 2-oxoglutarate.

This sequence belongs to the iron/ascorbate-dependent oxidoreductase family. Fe(2+) is required as a cofactor. It depends on Cu(2+) as a cofactor. Expressed in vegetative tissues. Constitutively expressed in leaves and blades. In ethylene exposed etiolated seedlings, localized in cells at the outer side of the exaggerated hook in an ethylene-dependent manner and following an ethylene sensitive pattern. Also detected in the root tip when treated by ethylene.

It carries out the reaction 1-aminocyclopropane-1-carboxylate + L-ascorbate + O2 = ethene + L-dehydroascorbate + hydrogen cyanide + CO2 + 2 H2O. It functions in the pathway alkene biosynthesis; ethylene biosynthesis via S-adenosyl-L-methionine; ethylene from S-adenosyl-L-methionine: step 2/2. Functionally, enzyme involved in the ethylene biosynthesis. Required to mediate the 1-aminocyclopropane-1-carboxylic acid (ACC)-mediated reversion of the ABA-induced inhibition of seed germination via endosperm rupture. May promote stem elongation by maximizing the extensibility cells, possibly by activating ethylene biosynthesis, in response to very-long-chain fatty acids (VLCFAs C20:0 to C30:0). The polypeptide is 1-aminocyclopropane-1-carboxylate oxidase 2 (ACO2) (Arabidopsis thaliana (Mouse-ear cress)).